The following is a 131-amino-acid chain: Snaclec bitiscetin subunit alpha (131 aa).

Disulfide bonds link Cys4–Cys15, Cys32–Cys125, and Cys100–Cys117. Residues 11–126 form the C-type lectin domain; that stretch reads YKGHCYKVFK…CGEKNPFICK (116 aa).

The protein belongs to the snaclec family. In terms of assembly, heterodimer of subunits alpha and beta; disulfide-linked. In terms of tissue distribution, expressed by the venom gland.

It is found in the secreted. In terms of biological role, snaclec that binds to von Willebrand factor (VWF) and induces its interaction with GPIbalpha (GP1BA) (via the vWF A1 domain), resulting in platelet aggregation. This chain is Snaclec bitiscetin subunit alpha, found in Bitis arietans (African puff adder).